Consider the following 428-residue polypeptide: Tyrosine--tRNA ligase (428 aa).

Tyr-34 is a binding site for L-tyrosine. The 'HIGH' region motif lies at 39-48 (PTADSLHIGH). Positions 171 and 175 each coordinate L-tyrosine. Residues 236–240 (KFGKT) carry the 'KMSKS' region motif. An ATP-binding site is contributed by Lys-239. One can recognise an S4 RNA-binding domain in the interval 358–424 (VGLIDLLVDA…GKKKYFLIQV (67 aa)).

This sequence belongs to the class-I aminoacyl-tRNA synthetase family. TyrS type 1 subfamily. As to quaternary structure, homodimer.

Its subcellular location is the cytoplasm. It catalyses the reaction tRNA(Tyr) + L-tyrosine + ATP = L-tyrosyl-tRNA(Tyr) + AMP + diphosphate + H(+). Functionally, catalyzes the attachment of tyrosine to tRNA(Tyr) in a two-step reaction: tyrosine is first activated by ATP to form Tyr-AMP and then transferred to the acceptor end of tRNA(Tyr). This is Tyrosine--tRNA ligase from Oceanobacillus iheyensis (strain DSM 14371 / CIP 107618 / JCM 11309 / KCTC 3954 / HTE831).